The primary structure comprises 160 residues: Troponin C, skeletal muscle (160 aa).

EF-hand domains are found at residues 15–50 (EMIA…LGQN), 51–86 (PTRE…QLKE), 91–126 (KSEE…SGEP), and 127–160 (VSEE…ENIQ). Ca(2+) contacts are provided by Asp-28, Asp-30, Asp-34, Glu-39, Asp-64, Asp-66, Ser-68, Thr-70, Glu-75, Asp-104, Asn-106, Asp-108, Glu-115, Asp-140, Asn-142, Asp-144, Lys-146, and Glu-151.

This sequence belongs to the troponin C family.

Its function is as follows. Troponin is the central regulatory protein of striated muscle contraction. Tn consists of three components: Tn-I which is the inhibitor of actomyosin ATPase, Tn-T which contains the binding EF-hand for tropomyosin and Tn-C. The binding of calcium to Tn-C abolishes the inhibitory action of Tn on actin filaments. This Anguilla anguilla (European freshwater eel) protein is Troponin C, skeletal muscle.